The chain runs to 138 residues: Protein PsiE homolog (138 aa).

The next 4 helical transmembrane spans lie at 12-34 (YLLQ…ALLI), 56-76 (YEML…ALII), 84-104 (HFPL…LIII), and 109-129 (AIST…FFIA).

Belongs to the PsiE family.

Its subcellular location is the cell membrane. The chain is Protein PsiE homolog from Bacillus subtilis (strain 168).